We begin with the raw amino-acid sequence, 557 residues long: Dihydroxy-acid dehydratase (557 aa).

Asp-78 contributes to the Mg(2+) binding site. Residue Cys-119 participates in [2Fe-2S] cluster binding. 2 residues coordinate Mg(2+): Asp-120 and Lys-121. N6-carboxylysine is present on Lys-121. Cys-192 lines the [2Fe-2S] cluster pocket. A Mg(2+)-binding site is contributed by Glu-442. The active-site Proton acceptor is the Ser-468.

This sequence belongs to the IlvD/Edd family. As to quaternary structure, homodimer. [2Fe-2S] cluster serves as cofactor. Mg(2+) is required as a cofactor.

It catalyses the reaction (2R)-2,3-dihydroxy-3-methylbutanoate = 3-methyl-2-oxobutanoate + H2O. It carries out the reaction (2R,3R)-2,3-dihydroxy-3-methylpentanoate = (S)-3-methyl-2-oxopentanoate + H2O. The protein operates within amino-acid biosynthesis; L-isoleucine biosynthesis; L-isoleucine from 2-oxobutanoate: step 3/4. It functions in the pathway amino-acid biosynthesis; L-valine biosynthesis; L-valine from pyruvate: step 3/4. Functions in the biosynthesis of branched-chain amino acids. Catalyzes the dehydration of (2R,3R)-2,3-dihydroxy-3-methylpentanoate (2,3-dihydroxy-3-methylvalerate) into 2-oxo-3-methylpentanoate (2-oxo-3-methylvalerate) and of (2R)-2,3-dihydroxy-3-methylbutanoate (2,3-dihydroxyisovalerate) into 2-oxo-3-methylbutanoate (2-oxoisovalerate), the penultimate precursor to L-isoleucine and L-valine, respectively. The sequence is that of Dihydroxy-acid dehydratase from Bacillus cereus (strain ATCC 10987 / NRS 248).